The following is a 1406-amino-acid chain: DNA-directed RNA polymerase subunit beta' (1406 aa).

Zn(2+) is bound by residues C72, C74, C87, and C90. Residues D462, D464, and D466 each contribute to the Mg(2+) site. Residues C816, C891, C898, and C901 each contribute to the Zn(2+) site.

It belongs to the RNA polymerase beta' chain family. The RNAP catalytic core consists of 2 alpha, 1 beta, 1 beta' and 1 omega subunit. When a sigma factor is associated with the core the holoenzyme is formed, which can initiate transcription. It depends on Mg(2+) as a cofactor. Zn(2+) is required as a cofactor.

The catalysed reaction is RNA(n) + a ribonucleoside 5'-triphosphate = RNA(n+1) + diphosphate. In terms of biological role, DNA-dependent RNA polymerase catalyzes the transcription of DNA into RNA using the four ribonucleoside triphosphates as substrates. This chain is DNA-directed RNA polymerase subunit beta', found in Psychrobacter arcticus (strain DSM 17307 / VKM B-2377 / 273-4).